The primary structure comprises 400 residues: Na(+)/H(+) antiporter NhaA (400 aa).

The next 11 membrane-spanning stretches (helical) occupy residues 10–30 (FNLE…AMII), 60–80 (AHHW…GLEL), 95–115 (IILP…VYLF), 126–146 (GWAI…SLLG), 155–175 (VFLV…IALF), 178–198 (NDLS…LYML), 218–238 (IAVL…ALFI), 265–285 (GILP…AGFG), 295–315 (IAAG…WLIF), 334–354 (AALL…LAFA), and 364–384 (LGII…LKTT).

The protein belongs to the NhaA Na(+)/H(+) (TC 2.A.33) antiporter family.

The protein resides in the cell inner membrane. It catalyses the reaction Na(+)(in) + 2 H(+)(out) = Na(+)(out) + 2 H(+)(in). In terms of biological role, na(+)/H(+) antiporter that extrudes sodium in exchange for external protons. In Psychrobacter arcticus (strain DSM 17307 / VKM B-2377 / 273-4), this protein is Na(+)/H(+) antiporter NhaA.